A 1252-amino-acid chain; its full sequence is Putative late blight resistance protein homolog R1B-11 (1252 aa).

The stretch at 543–566 forms a coiled coil; that stretch reads RYSDSLAFLKNQLQVIQTEFESLQ. NB-ARC domains follow at residues 684–736 and 786–830; these read SVRR…RSRI and SYHV…SSEG. LRR repeat units follow at residues 955-980, 998-1026, 1077-1100, 1103-1125, 1126-1149, 1187-1212, and 1213-1236; these read FKFLKVLDLEHQIVIDFIPTELPYLR, LWNLETLILKRRSAATYKTLLLPSTVWDM, LKHLEVLELYRVEFGDHGEWKVSS, FPKLKILKLDYVSLMKWIVADDA, FPNLEQLVSLGCQNLMEIPSCFTD, LVIIKKLVLKFDRFHGDEEIRKRLSS, and LPGIKSISINRGEKKLTVGGDVDA. In terms of domain architecture, HMA spans 1188–1252; sequence VIIKKLVLKF…VGKLNKRDML (65 aa).

This sequence belongs to the disease resistance NB-LRR family.

It localises to the cytoplasm. The protein localises to the membrane. Confers resistance to late blight (Phytophthora infestans) races carrying the avirulence gene Avr1. Resistance proteins guard the plant against pathogens that contain an appropriate avirulence protein via an indirect interaction with this avirulence protein. That triggers a defense system including the hypersensitive response, which restricts the pathogen growth. The polypeptide is Putative late blight resistance protein homolog R1B-11 (R1B-11) (Solanum demissum (Wild potato)).